We begin with the raw amino-acid sequence, 221 residues long: Translation initiation factor 6 (221 aa).

This sequence belongs to the eIF-6 family.

In terms of biological role, binds to the 50S ribosomal subunit and prevents its association with the 30S ribosomal subunit to form the 70S initiation complex. The protein is Translation initiation factor 6 of Natronomonas pharaonis (strain ATCC 35678 / DSM 2160 / CIP 103997 / JCM 8858 / NBRC 14720 / NCIMB 2260 / Gabara) (Halobacterium pharaonis).